Reading from the N-terminus, the 172-residue chain is Large ribosomal subunit protein uL10 (172 aa).

It belongs to the universal ribosomal protein uL10 family. Part of the ribosomal stalk of the 50S ribosomal subunit. The N-terminus interacts with L11 and the large rRNA to form the base of the stalk. The C-terminus forms an elongated spine to which L12 dimers bind in a sequential fashion forming a multimeric L10(L12)X complex.

Functionally, forms part of the ribosomal stalk, playing a central role in the interaction of the ribosome with GTP-bound translation factors. The protein is Large ribosomal subunit protein uL10 (rplJ) of Liberibacter asiaticus (Citrus greening disease).